The sequence spans 238 residues: Uridylate kinase (238 aa).

12–15 provides a ligand contact to ATP; it reads KLSG. Gly54 lines the UMP pocket. Residues Gly55 and Arg59 each coordinate ATP. UMP-binding positions include Asp74 and 135 to 142; that span reads TGNPFFTT. Residues Thr162, Tyr168, and Asp171 each coordinate ATP.

This sequence belongs to the UMP kinase family. In terms of assembly, homohexamer.

Its subcellular location is the cytoplasm. It carries out the reaction UMP + ATP = UDP + ADP. It participates in pyrimidine metabolism; CTP biosynthesis via de novo pathway; UDP from UMP (UMPK route): step 1/1. Its activity is regulated as follows. Inhibited by UTP. Functionally, catalyzes the reversible phosphorylation of UMP to UDP. In Dechloromonas aromatica (strain RCB), this protein is Uridylate kinase.